The following is a 290-amino-acid chain: MTKDRLAALKAAQSDDDDNDDVAVTVDSSGFMEEFFEQVDEIREMIDKIASNVDEVKKKHSAILSAPQTDDKMKEELEELMSEIKKNANKVRAKLKVIEQNIEQEEHTNKSSADLRIRKTQHATLSRKFVEVMNDYNACQIDYRERCKGRIKRQLAITGKTTTNEELEDMIESGNPAIFTQGIIMETQQANETLADIEARHNDIMKLETSIRDLHDMFMDMAMLVESQGEMIDRIEYNVEQAVDYIETAKMDTKKAVKYQSKARRKKIMILVCLAILIIILVGVIGGTLG.

The tract at residues 1–22 is disordered; the sequence is MTKDRLAALKAAQSDDDDNDDV. Residues 1 to 267 are Cytoplasmic-facing; sequence MTKDRLAALK…KYQSKARRKK (267 aa). The stretch at 32–114 forms a coiled coil; that stretch reads MEEFFEQVDE…EEHTNKSSAD (83 aa). One can recognise a t-SNARE coiled-coil homology domain in the interval 194–256; the sequence is LADIEARHND…ETAKMDTKKA (63 aa). A helical; Anchor for type IV membrane protein membrane pass occupies residues 268-288; it reads IMILVCLAILIIILVGVIGGT. Residues 289 to 290 lie on the Extracellular side of the membrane; it reads LG.

This sequence belongs to the syntaxin family.

The protein resides in the membrane. Potentially involved in docking of synaptic vesicles at presynaptic active zones. This Aplysia californica (California sea hare) protein is Syntaxin.